Here is a 155-residue protein sequence, read N- to C-terminus: Small ribosomal subunit protein uS9 (155 aa).

It belongs to the universal ribosomal protein uS9 family.

The polypeptide is Small ribosomal subunit protein uS9 (Rhizobium etli (strain CIAT 652)).